The chain runs to 70 residues: uncharacterized protein (70 aa).

A helical transmembrane segment spans residues 15 to 37 (IFAFLLFRLCKFCCVFCCALCNV).

Its subcellular location is the membrane. This is an uncharacterized protein from Dictyostelium discoideum (Social amoeba).